The following is a 309-amino-acid chain: Malate dehydrogenase (309 aa).

NAD(+) is bound by residues 6–11 (GSGRVG) and D31. Substrate contacts are provided by R80 and R86. Residues N93 and 116 to 118 (TTN) contribute to the NAD(+) site. Positions 118 and 149 each coordinate substrate. Residue H173 is the Proton acceptor of the active site.

Belongs to the LDH/MDH superfamily.

It carries out the reaction (S)-malate + NAD(+) = oxaloacetate + NADH + H(+). Functionally, catalyzes the reversible oxidation of malate to oxaloacetate. The polypeptide is Malate dehydrogenase (mdh) (Caldivirga maquilingensis (strain ATCC 700844 / DSM 13496 / JCM 10307 / IC-167)).